The sequence spans 212 residues: Phosphatidylserine decarboxylase proenzyme (212 aa).

Ser-182 (schiff-base intermediate with substrate; via pyruvic acid) is an active-site residue. Ser-182 is subject to Pyruvic acid (Ser); by autocatalysis.

The protein belongs to the phosphatidylserine decarboxylase family. PSD-A subfamily. In terms of assembly, heterodimer of a large membrane-associated beta subunit and a small pyruvoyl-containing alpha subunit. It depends on pyruvate as a cofactor. In terms of processing, is synthesized initially as an inactive proenzyme. Formation of the active enzyme involves a self-maturation process in which the active site pyruvoyl group is generated from an internal serine residue via an autocatalytic post-translational modification. Two non-identical subunits are generated from the proenzyme in this reaction, and the pyruvate is formed at the N-terminus of the alpha chain, which is derived from the carboxyl end of the proenzyme. The post-translation cleavage follows an unusual pathway, termed non-hydrolytic serinolysis, in which the side chain hydroxyl group of the serine supplies its oxygen atom to form the C-terminus of the beta chain, while the remainder of the serine residue undergoes an oxidative deamination to produce ammonia and the pyruvoyl prosthetic group on the alpha chain.

The protein resides in the cell membrane. It catalyses the reaction a 1,2-diacyl-sn-glycero-3-phospho-L-serine + H(+) = a 1,2-diacyl-sn-glycero-3-phosphoethanolamine + CO2. It functions in the pathway phospholipid metabolism; phosphatidylethanolamine biosynthesis; phosphatidylethanolamine from CDP-diacylglycerol: step 2/2. Functionally, catalyzes the formation of phosphatidylethanolamine (PtdEtn) from phosphatidylserine (PtdSer). This is Phosphatidylserine decarboxylase proenzyme from Chlorobium luteolum (strain DSM 273 / BCRC 81028 / 2530) (Pelodictyon luteolum).